The primary structure comprises 166 residues: Lipoprotein signal peptidase (166 aa).

The next 3 helical transmembrane spans lie at 12 to 32, 70 to 90, and 102 to 122; these read WLWV…LILQ, WFFS…MYRS, and ALII…GFVV. Active-site residues include Asp123 and Asp141. The helical transmembrane segment at 137-157 threads the bilayer; the sequence is FNLADSAICIGAALIVLEGFL.

This sequence belongs to the peptidase A8 family.

The protein resides in the cell inner membrane. The catalysed reaction is Release of signal peptides from bacterial membrane prolipoproteins. Hydrolyzes -Xaa-Yaa-Zaa-|-(S,diacylglyceryl)Cys-, in which Xaa is hydrophobic (preferably Leu), and Yaa (Ala or Ser) and Zaa (Gly or Ala) have small, neutral side chains.. Its pathway is protein modification; lipoprotein biosynthesis (signal peptide cleavage). In terms of biological role, this protein specifically catalyzes the removal of signal peptides from prolipoproteins. This chain is Lipoprotein signal peptidase, found in Klebsiella pneumoniae subsp. pneumoniae (strain ATCC 700721 / MGH 78578).